The sequence spans 271 residues: Insulin-like growth factor-binding protein 5 (271 aa).

The signal sequence occupies residues 1–19 (MVLTAVLLLLAACAGPAQG). In terms of domain architecture, IGFBP N-terminal spans 22 to 102 (SFVHCEPCDE…LHGRGVCLNE (81 aa)). 6 disulfide bridges follow: cysteine 26–cysteine 52, cysteine 29–cysteine 54, cysteine 37–cysteine 55, cysteine 44–cysteine 58, cysteine 66–cysteine 79, and cysteine 73–cysteine 99. Over residues 109-121 (AKIERDSREHEEP) the composition is skewed to basic and acidic residues. Positions 109–129 (AKIERDSREHEEPTTSEMAEE) are disordered. Serine 115 bears the Phosphoserine mark. Residues 188–262 (QGPCRRHMEA…MEYVDGDFQC (75 aa)) form the Thyroglobulin type-1 domain. Cystine bridges form between cysteine 191/cysteine 218, cysteine 229/cysteine 240, and cysteine 242/cysteine 262.

As to quaternary structure, interacts with IGF1; this interaction enhances the growth stimulatory effects of IGF1 on fibroblasts. Interacts with CAV1; this interaction allows trafficking of IGFBP5 from the plasma membrane to the nucleus. Interacts with NCL; this interaction is necessary for IGFBP5 localization to the nucleus.

The protein resides in the secreted. It localises to the cytoplasm. Its subcellular location is the nucleus. Functionally, multifunctional protein that plays a critical role in regulating the availability of IGFs to their receptors and thereby regulates IGF-mediated cellular processes including proliferation, differentiation, and apoptosis in a cell-type specific manner. Increases the cell proliferation of osteoblasts, intestinal smooth muscle cells and neuroblastoma cells. Enhances adhesion and survival of epithelial cells but decreases adhesion of mesenchymal cells. Once secreted, acts as a major mediator of mTORC1-dependent feedback inhibition of IGF1 signaling. Also plays a role in the induction of extracellular matrix (ECM) production and deposition independently of its nuclear translocation and binding to IGFs. Acts itself as a growth factor that can act independently of IGFs to regulate bone formation. Acts as a ligand for the ROR1 receptor which triggers formation of ROR1/HER2 heterodimer to enhance CREB oncogenic signaling. This Sus scrofa (Pig) protein is Insulin-like growth factor-binding protein 5 (IGFBP5).